The following is a 228-amino-acid chain: Urease accessory protein UreF (228 aa).

This sequence belongs to the UreF family. UreD, UreF and UreG form a complex that acts as a GTP-hydrolysis-dependent molecular chaperone, activating the urease apoprotein by helping to assemble the nickel containing metallocenter of UreC. The UreE protein probably delivers the nickel.

The protein resides in the cytoplasm. Required for maturation of urease via the functional incorporation of the urease nickel metallocenter. The polypeptide is Urease accessory protein UreF (Alkalilimnicola ehrlichii (strain ATCC BAA-1101 / DSM 17681 / MLHE-1)).